We begin with the raw amino-acid sequence, 306 residues long: MTSIEDLISNPPLLLHSSLSQLRYLILSEGLPISEDKQQQRTRCYVWTVLSQTSMEASTQRYLALLKLGPPSTTIYQKIKNDTSRTFQTDPNFRNRVSEDALIRCLSCFAWQTQQRRQKTRFGRIPVSTYVQGMNVLLAPLLYSCPSEPMAYQLFTKLCYEMIPTYLTKNLNGAQNGAKLLDISLRIIDPKLSKFLSDNLLTAEIYGMPSILTLSSCNKPLDQVIKLWDFMFAYGFHMNILFVVAFLVKMRSKVFKSDSPVNLLRQFPDFDADEIIRLGVGFIAKIPAQIYDLLVDHLTDPDIYIP.

The region spanning 37-235 is the Rab-GAP TBC domain; sequence KQQQRTRCYV…KLWDFMFAYG (199 aa).

It belongs to the BUB2 family. In terms of assembly, interacts with BFA1.

It localises to the cytoplasm. The protein localises to the cytoskeleton. Its subcellular location is the spindle pole. Its function is as follows. Part of a checkpoint which monitors spindle integrity and prevents premature exit from mitosis. This cell-cycle arrest depends upon inhibition of the GTP-binding protein TEM1 by the BFA1/BUB2 complex. This chain is Mitotic check point protein BUB2 (BUB2), found in Saccharomyces cerevisiae (strain ATCC 204508 / S288c) (Baker's yeast).